A 789-amino-acid chain; its full sequence is Alpha-glucosidase 2 (789 aa).

2 disordered regions span residues 1-24 (MTGL…PRVI) and 512-531 (ELNP…ASHP). Asp-523 functions as the Proton donor in the catalytic mechanism. Catalysis depends on Glu-756, which acts as the Proton acceptor.

It belongs to the glycosyl hydrolase 63 family.

Its pathway is glycan metabolism; N-glycan degradation. The protein is Alpha-glucosidase 2 (GCS2) of Arabidopsis thaliana (Mouse-ear cress).